The sequence spans 250 residues: Hydroxyacylglutathione hydrolase (250 aa).

Residues histidine 53, histidine 55, aspartate 57, histidine 58, histidine 110, aspartate 127, and histidine 165 each coordinate Zn(2+).

Belongs to the metallo-beta-lactamase superfamily. Glyoxalase II family. In terms of assembly, monomer. Zn(2+) serves as cofactor.

It carries out the reaction an S-(2-hydroxyacyl)glutathione + H2O = a 2-hydroxy carboxylate + glutathione + H(+). It participates in secondary metabolite metabolism; methylglyoxal degradation; (R)-lactate from methylglyoxal: step 2/2. Thiolesterase that catalyzes the hydrolysis of S-D-lactoyl-glutathione to form glutathione and D-lactic acid. This chain is Hydroxyacylglutathione hydrolase, found in Photorhabdus laumondii subsp. laumondii (strain DSM 15139 / CIP 105565 / TT01) (Photorhabdus luminescens subsp. laumondii).